A 239-amino-acid chain; its full sequence is Orotidine 5'-phosphate decarboxylase (239 aa).

Residues Asp15, Lys36, 63–72, Thr127, Arg189, Gln198, Gly218, and Arg219 contribute to the substrate site; that span reads DLKFHDIPNT. Lys65 serves as the catalytic Proton donor.

This sequence belongs to the OMP decarboxylase family. Type 1 subfamily. In terms of assembly, homodimer.

It carries out the reaction orotidine 5'-phosphate + H(+) = UMP + CO2. It participates in pyrimidine metabolism; UMP biosynthesis via de novo pathway; UMP from orotate: step 2/2. Functionally, catalyzes the decarboxylation of orotidine 5'-monophosphate (OMP) to uridine 5'-monophosphate (UMP). This Prochlorococcus marinus (strain MIT 9515) protein is Orotidine 5'-phosphate decarboxylase.